The following is a 550-amino-acid chain: Alkaline phosphatase PhoV (550 aa).

Positions 1-20 are cleaved as a signal peptide; sequence MKIKLLCISLAVLFCSSANA. Residues aspartate 48 and threonine 89 each coordinate Zn(2+). The active-site Phosphothreonine intermediate is threonine 89. Substrate contacts are provided by residues asparagine 110 and 171–173; that span reads KDR. Aspartate 313, histidine 317, aspartate 360, histidine 361, and histidine 491 together coordinate Zn(2+).

Requires Zn(2+) as cofactor.

It localises to the cell inner membrane. It carries out the reaction a phosphate monoester + H2O = an alcohol + phosphate. Its activity is regulated as follows. Subject to competitive inhibition by phosphate. Inhibited by manganese. Magnesium mildly increases enzyme activity when the zinc concentration is suboptimal. Optimal activity is dependent on the presence of 0.01-2% Triton X-100. Triton X-100 at a concentration of 0.05% increases the activity about fivefold relative to that in its absence. The enzyme is even active in Triton X-100 concentrations up to 80%. 50% inhibition by 4 mM EDTA and 50% inhibition by 48 mM sodium citrate. Its function is as follows. Alkaline phosphatase with broad substrate specificity. The sequence is that of Alkaline phosphatase PhoV from Synechococcus elongatus (strain ATCC 33912 / PCC 7942 / FACHB-805) (Anacystis nidulans R2).